A 231-amino-acid polypeptide reads, in one-letter code: Tegument protein UL51 homolog (231 aa).

The S-palmitoyl cysteine; by host moiety is linked to residue Cys-12.

The protein belongs to the herpesviridae UL51 family. As to quaternary structure, oligomerizes. Interacts with U75; this interaction mediates U75 incorporation to virions. Post-translationally, phosphorylated. Palmitoylation is necessary for Golgi localization.

The protein localises to the virion tegument. Its subcellular location is the host cytoplasm. It is found in the host Golgi apparatus. Its function is as follows. Plays several roles during the time course of infection, including egress of virus particles from the perinuclear space and secondary envelopment of cytoplasmic capsids that bud into specific trans-Golgi network (TGN)-derived membranes. The protein is Tegument protein UL51 homolog (U44) of Human herpesvirus 6B (strain Z29) (HHV-6 variant B).